The chain runs to 359 residues: Probable isoaspartyl peptidase/L-asparaginase 3 (359 aa).

Catalysis depends on Thr224, which acts as the Nucleophile. Residues 252–255 and 275–278 each bind substrate; these read RVGD and TGDG.

It belongs to the Ntn-hydrolase family. In terms of assembly, heterotetramer of two alpha and two beta chains arranged as a dimer of alpha/beta heterodimers. Post-translationally, cleaved into an alpha and beta chain by autocatalysis; this activates the enzyme. The N-terminal residue of the beta subunit is responsible for the nucleophile hydrolase activity.

It carries out the reaction Cleavage of a beta-linked Asp residue from the N-terminus of a polypeptide.. Acts in asparagine catabolism but also in the final steps of protein degradation via hydrolysis of a range of isoaspartyl dipeptides. This is Probable isoaspartyl peptidase/L-asparaginase 3 from Arabidopsis thaliana (Mouse-ear cress).